Consider the following 383-residue polypeptide: Probable cell wall hydrolase LytN (383 aa).

The first 49 residues, 1–49 (MFVYYCKECFIMNKQQSKVRYSIRKVSIGILSISIGMFLALGMSNKAYA), serve as a signal peptide directing secretion. The region spanning 175 to 219 (QIYTVKKGDTLSAIALKYKTTVSNIQNTNNIANPNLIFIGQKLKV) is the LysM domain. One can recognise a Peptidase C51 domain in the interval 241-378 (NSSTLNYLKT…NYENDMIFIR (138 aa)).

It localises to the secreted. Probably involved in peptidoglycan hydrolysis. The chain is Probable cell wall hydrolase LytN (lytN) from Staphylococcus aureus (strain MSSA476).